A 634-amino-acid chain; its full sequence is Factor of DNA methylation 5 (634 aa).

A coiled-coil region spans residues 254 to 469 (IVVDDLANKI…EDTNSALMVK (216 aa)).

Acts in association with FDM3 and FDM4 for RNA-directed DNA methylation (RdDM). In Arabidopsis thaliana (Mouse-ear cress), this protein is Factor of DNA methylation 5.